Here is a 304-residue protein sequence, read N- to C-terminus: Probable phytol kinase 2, chloroplastic (304 aa).

Residues 1-59 constitute a chloroplast transit peptide; it reads MVSLISAHLLSLPSSAPRSRPQSRPPLSPPAAAAAASCSFDLPRPRRLVADGSRRKGTM. 7 consecutive transmembrane segments (helical) span residues 68–88, 113–133, 134–154, 170–190, 194–214, 231–251, and 256–276; these read SGLA…LALL, IGMV…APFL, AAVA…GVMK, ELLK…SIFW, PIAI…DIVG, AGSI…MHYF, and FIEE…TAAL.

The protein belongs to the polyprenol kinase family.

The protein localises to the plastid. It is found in the chloroplast membrane. The enzyme catalyses phytol + CTP = phytyl phosphate + CDP + H(+). It participates in cofactor biosynthesis; tocopherol biosynthesis. Involved in the activation and reutilization of phytol from chlorophyll degradation in plant metabolism, including tocopherol biosynthesis. Catalyzes the conversion of phytol to phytol monophosphate (PMP). In Oryza sativa subsp. japonica (Rice), this protein is Probable phytol kinase 2, chloroplastic.